Here is a 303-residue protein sequence, read N- to C-terminus: uncharacterized protein (303 aa).

Phosphoserine is present on Ser-63.

It belongs to the HAD-like hydrolase superfamily.

The protein localises to the cytoplasm. The protein resides in the nucleus. This is an uncharacterized protein from Schizosaccharomyces pombe (strain 972 / ATCC 24843) (Fission yeast).